A 495-amino-acid chain; its full sequence is MGATATDIEKVPSAGTPDEPKAGETNVYVDTEAEKSFVRKVDFFVLPMLCLMYFFDCMDRSNLANAKTDGLEEDINLKGNEYSLLILLFYIPFGLFDLPWNLLIKRYSARIMLSLRRYAVTVVWGICALCQCAANNFGGLLAIRIILGVFEAGFFAGSTFYFTLFYTRNEMGFRLAVLQSFAVLASAFSGLISFGLFQINHSAVKGWQWLFIVEGAMTLIIGVIGFWWLPDTAQSAWFLTQRERDAASARLLRDTSAEIETKLELKAAFQTWSDWKFPIWAVITFSYPVAYATAMNFFPIIVARLGYSVVKTNLWTVAPNLVGAVVLLVVAKSSDIFRERSLHIIFSLTVSLVGMLILASIDVSHNKGVSYFACFLLASGAYIPTCLVHAWHNNNNTNENSRAANTGFFVGLGNIAGVLSAATFRTEYAPKYVPTLVATCACNGVCILATAFMGTWMRLENRRKDKEQGARIVAGQVETRMLADGEKSPEWRYFL.

The tract at residues 1-24 (MGATATDIEKVPSAGTPDEPKAGE) is disordered. A run of 5 helical transmembrane segments spans residues 36-55 (SFVR…MYFF), 84-104 (LLIL…NLLI), 123-143 (VWGI…LLAI), 145-165 (IILG…FTLF), and 177-197 (VLQS…FGLF). Residue N200 is glycosylated (N-linked (GlcNAc...) asparagine). 5 helical membrane passes run 209–229 (WLFI…FWWL), 282–302 (VITF…PIIV), 314–334 (LWTV…AKSS), 341–361 (SLHI…LASI), and 368–388 (GVSY…TCLV). N-linked (GlcNAc...) asparagine glycosylation is present at N395. The next 2 membrane-spanning stretches (helical) occupy residues 404-424 (ANTG…AATF) and 436-456 (LVAT…MGTW).

It belongs to the major facilitator superfamily.

The protein resides in the cell membrane. Major facilitator-type transporter, part of the hnx cluster involved in the purine degradation. The nicotinate hydroxylase hnxS accepts nicotinate as a substrate and catalyzes the first step of nicotinate catabolism. The major facilitator-type transporters hxnP and hxnZ are probably involved in the uptake of nicotinate-derived metabolites, and the oxidoreductases hxnT and hxnY in the further metabolism of 6-OH nicotinic acid. This Emericella nidulans (strain FGSC A4 / ATCC 38163 / CBS 112.46 / NRRL 194 / M139) (Aspergillus nidulans) protein is Major facilitator-type transporter hxnP.